Here is a 501-residue protein sequence, read N- to C-terminus: MELELDLSFFYKTTILPECVLIFCLISILILDLILKIKDKNVFFFISLVSLLLSIFILIFQLKEEPVISFLGNFQADNFNKIFRIFIALCSILCIPLSIDFIKCTKLAITEFLIFLLTATIGGMFLCGANDLITIFVSLECLSLCSYLLSGYTKKDVRSNEAVMKYLLIGGTSSSILAYGFSWLYGLSGGEFQLQKIADGLVSTEMYNSFGSLLALVFIIVGIGFKLSLVPFHQWTPDVYEGSPTPVVAFLSVASKIAGLALLVRLFNIVFPFLPNQWHSLLEISAICSMILGNLVAITQTSMKRMLAYSSISQIGYLMIGLVTGNFDGYTSMIVYLLFYIFMNLGTFACIILFGLRTGTDNIRDYSGLILKDPLLTFSLALCLLSLGGIPPLSGFFGKLYLFWCAWKTGLYFLVFIGLFTSVISIYYYLKIIKLLITTENKEVTSYVQSYTVSSFSLLSKNSIEVSIIICVIASIFLGIFMNPIINILQINLHLNTFTNI.

The next 14 helical transmembrane spans lie at 15–35 (ILPE…DLIL), 42–62 (VFFF…IFQL), 82–102 (IFRI…IDFI), 107–127 (LAIT…MFLC), 132–152 (LITI…LSGY), 167–187 (LLIG…LYGL), 210–230 (FGSL…LSLV), 244–264 (PTPV…ALLV), 278–298 (WHSL…LVAI), 307–327 (LAYS…TGNF), 334–354 (IVYL…IILF), 378–398 (FSLA…GFFG), 410–430 (GLYF…YYYL), and 466–486 (VSII…NPII).

The protein belongs to the complex I subunit 2 family. NDH is composed of at least 16 different subunits, 5 of which are encoded in the nucleus.

Its subcellular location is the plastid. The protein localises to the chloroplast thylakoid membrane. The catalysed reaction is a plastoquinone + NADH + (n+1) H(+)(in) = a plastoquinol + NAD(+) + n H(+)(out). The enzyme catalyses a plastoquinone + NADPH + (n+1) H(+)(in) = a plastoquinol + NADP(+) + n H(+)(out). In terms of biological role, NDH shuttles electrons from NAD(P)H:plastoquinone, via FMN and iron-sulfur (Fe-S) centers, to quinones in the photosynthetic chain and possibly in a chloroplast respiratory chain. The immediate electron acceptor for the enzyme in this species is believed to be plastoquinone. Couples the redox reaction to proton translocation, and thus conserves the redox energy in a proton gradient. This Physcomitrium patens (Spreading-leaved earth moss) protein is NAD(P)H-quinone oxidoreductase subunit 2, chloroplastic.